The sequence spans 716 residues: Polyribonucleotide nucleotidyltransferase (716 aa).

D490 and D496 together coordinate Mg(2+). The 60-residue stretch at P556 to I615 folds into the KH domain. Positions G625–K693 constitute an S1 motif domain. The segment at V695–A716 is disordered. Basic and acidic residues predominate over residues Q704–A716.

It belongs to the polyribonucleotide nucleotidyltransferase family. The cofactor is Mg(2+).

It localises to the cytoplasm. The catalysed reaction is RNA(n+1) + phosphate = RNA(n) + a ribonucleoside 5'-diphosphate. Functionally, involved in mRNA degradation. Catalyzes the phosphorolysis of single-stranded polyribonucleotides processively in the 3'- to 5'-direction. The chain is Polyribonucleotide nucleotidyltransferase from Cereibacter sphaeroides (strain KD131 / KCTC 12085) (Rhodobacter sphaeroides).